The sequence spans 21 residues: Ocellatin-3 (21 aa).

At Ile21 the chain carries Isoleucine amide.

As to expression, expressed by the skin dorsal glands.

The protein resides in the secreted. Has hemolytic activity against human erythrocytes and antibacterial activity against the Gram-negative bacterium E.coli. The protein is Ocellatin-3 of Leptodactylus ocellatus (Argus frog).